The primary structure comprises 107 residues: Late histone H2B.L4 (107 aa).

O-linked (GlcNAc) serine glycosylation is present at Ser-94. A Glycyl lysine isopeptide (Lys-Gly) (interchain with G-Cter in ubiquitin) cross-link involves residue Lys-102.

Belongs to the histone H2B family. As to quaternary structure, the nucleosome is a histone octamer containing two molecules each of H2A, H2B, H3 and H4 assembled in one H3-H4 heterotetramer and two H2A-H2B heterodimers. The octamer wraps approximately 147 bp of DNA. Monoubiquitination gives a specific tag for epigenetic transcriptional activation and is also prerequisite for histone H3 'Lys-4' and 'Lys-79' methylation. In terms of processing, glcNAcylation at Ser-94 promotes monoubiquitination of Lys-102. It fluctuates in response to extracellular glucose, and associates with transcribed genes.

It localises to the nucleus. It is found in the chromosome. Core component of nucleosome. Nucleosomes wrap and compact DNA into chromatin, limiting DNA accessibility to the cellular machineries which require DNA as a template. Histones thereby play a central role in transcription regulation, DNA repair, DNA replication and chromosomal stability. DNA accessibility is regulated via a complex set of post-translational modifications of histones, also called histone code, and nucleosome remodeling. This is Late histone H2B.L4 from Strongylocentrotus purpuratus (Purple sea urchin).